The following is a 314-amino-acid chain: Putative SET domain-containing protein L222 (314 aa).

In terms of domain architecture, SET spans 23 to 172 (EYIQVIYQNP…ANTEITISYG (150 aa)).

The protein belongs to the class V-like SAM-binding methyltransferase superfamily.

The protein is Putative SET domain-containing protein L222 of Acanthamoeba polyphaga mimivirus (APMV).